The sequence spans 329 residues: Glutamyl-Q tRNA(Asp) synthetase (329 aa).

L-glutamate contacts are provided by residues Arg-8–Ser-12 and Glu-44. Positions Pro-11 to Asn-21 match the 'HIGH' region motif. The Zn(2+) site is built by Cys-100, Cys-102, Tyr-129, and Cys-133. Residues Tyr-196 and Arg-214 each contribute to the L-glutamate site. A 'KMSKS' region motif is present at residues Arg-252–Arg-256. Residue Lys-255 participates in ATP binding.

Belongs to the class-I aminoacyl-tRNA synthetase family. GluQ subfamily. Zn(2+) is required as a cofactor.

Its function is as follows. Catalyzes the tRNA-independent activation of glutamate in presence of ATP and the subsequent transfer of glutamate onto a tRNA(Asp). Glutamate is transferred on the 2-amino-5-(4,5-dihydroxy-2-cyclopenten-1-yl) moiety of the queuosine in the wobble position of the QUC anticodon. The protein is Glutamyl-Q tRNA(Asp) synthetase of Rhodopirellula baltica (strain DSM 10527 / NCIMB 13988 / SH1).